Consider the following 311-residue polypeptide: Tryptophan 2,3-dioxygenase (311 aa).

Residues 1–37 are disordered; the sequence is MQPPGGDAPAGCPFSGARAAQPAQAAHEAPHVPGEAD. The segment covering 17 to 27 has biased composition (low complexity); sequence ARAAQPAQAAH. Substrate-binding positions include 80–84, Y142, and R146; that span reads FIIQH. H269 provides a ligand contact to heme. Residue T283 participates in substrate binding.

Belongs to the tryptophan 2,3-dioxygenase family. As to quaternary structure, homotetramer. Heme serves as cofactor.

The catalysed reaction is L-tryptophan + O2 = N-formyl-L-kynurenine. It participates in amino-acid degradation; L-tryptophan degradation via kynurenine pathway; L-kynurenine from L-tryptophan: step 1/2. Heme-dependent dioxygenase that catalyzes the oxidative cleavage of the L-tryptophan (L-Trp) pyrrole ring and converts L-tryptophan to N-formyl-L-kynurenine. Catalyzes the oxidative cleavage of the indole moiety. The polypeptide is Tryptophan 2,3-dioxygenase (Burkholderia orbicola (strain MC0-3)).